The chain runs to 126 residues: Ribosome-binding factor A (126 aa).

The protein belongs to the RbfA family. As to quaternary structure, monomer. Binds 30S ribosomal subunits, but not 50S ribosomal subunits or 70S ribosomes.

The protein localises to the cytoplasm. Functionally, one of several proteins that assist in the late maturation steps of the functional core of the 30S ribosomal subunit. Associates with free 30S ribosomal subunits (but not with 30S subunits that are part of 70S ribosomes or polysomes). Required for efficient processing of 16S rRNA. May interact with the 5'-terminal helix region of 16S rRNA. This Treponema pallidum (strain Nichols) protein is Ribosome-binding factor A.